The following is a 1158-amino-acid chain: Condensin complex subunit 1 (1158 aa).

The interval 800 to 826 (HENTTSNDDHAMDEDLDDSPEEETLKD) is disordered. Over residues 810–826 (AMDEDLDDSPEEETLKD) the composition is skewed to acidic residues.

It belongs to the CND1 (condensin subunit 1) family. In terms of assembly, component of the condensin complex, which contains the cut14/smc2 and cut3/smc2 heterodimer, and three non SMC subunits that probably regulate the complex: cnd1, cnd2 and cnd3.

It localises to the nucleus. Its subcellular location is the cytoplasm. The protein resides in the chromosome. In terms of biological role, regulatory subunit of the condensin complex, a complex required for conversion of interphase chromatin into mitotic-like condense chromosomes. The condensin complex probably introduces positive supercoils into relaxed DNA in the presence of type I topoisomerases and converts nicked DNA into positive knotted forms in the presence of type II topoisomerases. The condensin complex probably also plays a role during interphase. This is Condensin complex subunit 1 (cnd1) from Schizosaccharomyces pombe (strain 972 / ATCC 24843) (Fission yeast).